We begin with the raw amino-acid sequence, 78 residues long: Large ribosomal subunit protein uL24 (78 aa).

Positions 52 to 78 (PSEKTPNGGHVNKEMPIDISNVAKVEG) are disordered.

Belongs to the universal ribosomal protein uL24 family. As to quaternary structure, part of the 50S ribosomal subunit.

One of two assembly initiator proteins, it binds directly to the 5'-end of the 23S rRNA, where it nucleates assembly of the 50S subunit. Its function is as follows. One of the proteins that surrounds the polypeptide exit tunnel on the outside of the subunit. This is Large ribosomal subunit protein uL24 from Campylobacter concisus (strain 13826).